Here is a 193-residue protein sequence, read N- to C-terminus: 7-methyl-GTP pyrophosphatase (193 aa).

Aspartate 70 (proton acceptor) is an active-site residue.

The protein belongs to the Maf family. YceF subfamily. It depends on a divalent metal cation as a cofactor.

The protein localises to the cytoplasm. The enzyme catalyses N(7)-methyl-GTP + H2O = N(7)-methyl-GMP + diphosphate + H(+). In terms of biological role, nucleoside triphosphate pyrophosphatase that hydrolyzes 7-methyl-GTP (m(7)GTP). May have a dual role in cell division arrest and in preventing the incorporation of modified nucleotides into cellular nucleic acids. This chain is 7-methyl-GTP pyrophosphatase, found in Vibrio cholerae serotype O1 (strain ATCC 39315 / El Tor Inaba N16961).